Here is a 420-residue protein sequence, read N- to C-terminus: UPF0229 protein LPC_3097 (420 aa).

Residues 83–107 (IAGDRIKRPGGGAGGAGGNASDSGE) form a disordered region. The segment covering 91-100 (PGGGAGGAGG) has biased composition (gly residues).

It belongs to the UPF0229 family.

The chain is UPF0229 protein LPC_3097 from Legionella pneumophila (strain Corby).